A 215-amino-acid chain; its full sequence is Probable phosphoglycerate mutase GpmB (215 aa).

Residues 8–15 (RHGETQWN), 21–22 (QG), arginine 58, lysine 60, 82–85 (ELDM), 104–105 (RR), and 151–152 (GI) contribute to the substrate site. The Tele-phosphohistidine intermediate role is filled by histidine 9. Glutamate 82 acts as the Proton donor/acceptor in catalysis.

Belongs to the phosphoglycerate mutase family. GpmB subfamily.

The enzyme catalyses (2R)-2-phosphoglycerate = (2R)-3-phosphoglycerate. Its pathway is carbohydrate degradation; glycolysis; pyruvate from D-glyceraldehyde 3-phosphate: step 3/5. This Salmonella typhi protein is Probable phosphoglycerate mutase GpmB.